The chain runs to 398 residues: Phosphoglycerate kinase (398 aa).

Substrate-binding positions include Asp23–Asn25, Arg38, His61–Lys64, Arg122, and Arg155. ATP-binding positions include Lys206, Gly297, Glu328, and Gly354–Ser357.

The protein belongs to the phosphoglycerate kinase family. In terms of assembly, monomer.

It localises to the cytoplasm. The enzyme catalyses (2R)-3-phosphoglycerate + ATP = (2R)-3-phospho-glyceroyl phosphate + ADP. The protein operates within carbohydrate degradation; glycolysis; pyruvate from D-glyceraldehyde 3-phosphate: step 2/5. The protein is Phosphoglycerate kinase of Clostridium botulinum (strain Langeland / NCTC 10281 / Type F).